A 150-amino-acid chain; its full sequence is Large-conductance mechanosensitive channel (150 aa).

2 helical membrane-spanning segments follow: residues 14–34 and 81–101; these read VIDLAVGVIIGGAFGKIVTSL and GLFINNVVDFLIIAFTIFIVI.

Belongs to the MscL family. As to quaternary structure, homopentamer.

Its subcellular location is the cell membrane. Channel that opens in response to stretch forces in the membrane lipid bilayer. May participate in the regulation of osmotic pressure changes within the cell. This is Large-conductance mechanosensitive channel from Desulfitobacterium hafniense (strain DSM 10664 / DCB-2).